The primary structure comprises 44 residues: MSDKPDMGEIQKFNKSKLKKTETQEKNPLPSKETIEQEKQAGES.

Residues Met1–Ser44 form a disordered region. Ser2 carries the N-acetylserine modification. Ser2 is subject to Phosphoserine. Lys4 is modified (N6-acetyllysine). Lys12 bears the N6-acetyllysine; alternate mark. Lys12 participates in a covalent cross-link: Glycyl lysine isopeptide (Lys-Gly) (interchain with G-Cter in SUMO2); alternate. Position 23 is a phosphothreonine (Thr23). N6-acetyllysine is present on Lys26. Ser31 bears the Phosphoserine mark. Position 32 is an N6-acetyllysine (Lys32). Residues Glu33–Ser44 show a composition bias toward basic and acidic residues. At Thr34 the chain carries Phosphothreonine. Lys39 carries the post-translational modification N6-acetyllysine.

Belongs to the thymosin beta family. Identified in a complex composed of ACTA1, COBL, GSN AND TMSB4X. Interacts with SERPINB1. Post-translationally, acSDKP is inactivated by ACE, which removes the dipeptide Lys-Pro from its C-terminus.

It is found in the cytoplasm. The protein resides in the cytoskeleton. In terms of biological role, plays an important role in the organization of the cytoskeleton. Binds to and sequesters actin monomers (G actin) and therefore inhibits actin polymerization. Functionally, potent inhibitor of bone marrow derived stem cell differentiation. Acts by inhibits the entry of hematopoietic pluripotent stem cells into the S-phase. The protein is Thymosin beta-4 (TMSB4) of Notamacropus eugenii (Tammar wallaby).